The chain runs to 404 residues: Imidazolonepropionase (404 aa).

Residues histidine 73 and histidine 75 each contribute to the Fe(3+) site. Zn(2+) contacts are provided by histidine 73 and histidine 75. Positions 82, 145, and 178 each coordinate 4-imidazolone-5-propanoate. Position 145 (tyrosine 145) interacts with N-formimidoyl-L-glutamate. Position 243 (histidine 243) interacts with Fe(3+). Histidine 243 provides a ligand contact to Zn(2+). Glutamine 246 lines the 4-imidazolone-5-propanoate pocket. Aspartate 318 is a Fe(3+) binding site. Aspartate 318 contacts Zn(2+). Positions 320 and 322 each coordinate N-formimidoyl-L-glutamate. Serine 323 serves as a coordination point for 4-imidazolone-5-propanoate.

It belongs to the metallo-dependent hydrolases superfamily. HutI family. The cofactor is Zn(2+). Fe(3+) is required as a cofactor.

It localises to the cytoplasm. The catalysed reaction is 4-imidazolone-5-propanoate + H2O = N-formimidoyl-L-glutamate. It participates in amino-acid degradation; L-histidine degradation into L-glutamate; N-formimidoyl-L-glutamate from L-histidine: step 3/3. In terms of biological role, catalyzes the hydrolytic cleavage of the carbon-nitrogen bond in imidazolone-5-propanoate to yield N-formimidoyl-L-glutamate. It is the third step in the universal histidine degradation pathway. This chain is Imidazolonepropionase, found in Bradyrhizobium sp. (strain BTAi1 / ATCC BAA-1182).